The chain runs to 124 residues: Small ribosomal subunit protein bS6 (124 aa).

This sequence belongs to the bacterial ribosomal protein bS6 family.

In terms of biological role, binds together with bS18 to 16S ribosomal RNA. In Bordetella avium (strain 197N), this protein is Small ribosomal subunit protein bS6.